The sequence spans 155 residues: Ribosomal RNA large subunit methyltransferase H (155 aa).

Residues L73, G104, and 123–128 contribute to the S-adenosyl-L-methionine site; that span reads LSPLTL.

It belongs to the RNA methyltransferase RlmH family. In terms of assembly, homodimer.

Its subcellular location is the cytoplasm. It catalyses the reaction pseudouridine(1915) in 23S rRNA + S-adenosyl-L-methionine = N(3)-methylpseudouridine(1915) in 23S rRNA + S-adenosyl-L-homocysteine + H(+). In terms of biological role, specifically methylates the pseudouridine at position 1915 (m3Psi1915) in 23S rRNA. The polypeptide is Ribosomal RNA large subunit methyltransferase H (Pseudomonas putida (strain ATCC 700007 / DSM 6899 / JCM 31910 / BCRC 17059 / LMG 24140 / F1)).